Reading from the N-terminus, the 525-residue chain is Ribosomal protein S6 kinase beta-1 (525 aa).

A TOS motif motif is present at residues 28–32 (FDIDL). The segment covering 32 to 46 (LDQPEDAGSEDELEE) has biased composition (acidic residues). Positions 32-54 (LDQPEDAGSEDELEEGGQLNESM) are disordered. Positions 91 to 352 (FELLRVLGKG…AGEVQAHPFF (262 aa)) constitute a Protein kinase domain. ATP is bound by residues 97 to 105 (LGKGGYGKV) and lysine 123. Residue aspartate 218 is the Proton acceptor of the active site. At threonine 252 the chain carries Phosphothreonine; by PDPK1. Residues 353–423 (RHINWEELLA…VAPSVLESVK (71 aa)) form the AGC-kinase C-terminal domain. Positions 380–399 (SQFDSKFTRQTPVDSPDDST) are disordered. Over residues 381-399 (QFDSKFTRQTPVDSPDDST) the composition is skewed to polar residues. Phosphoserine is present on serine 394. Threonine 412 is subject to Phosphothreonine; by MTOR, NEK6 and NEK7. The interval 424–525 (EKFSFEPKIR…KRPEHLRMNL (102 aa)) is autoinhibitory domain. A phosphoserine mark is found at serine 434 and serine 441. Threonine 444 is modified (phosphothreonine). A phosphoserine mark is found at serine 447 and serine 452. An N6-acetyllysine modification is found at lysine 516.

This sequence belongs to the protein kinase superfamily. AGC Ser/Thr protein kinase family. S6 kinase subfamily. As to quaternary structure, interacts with PPP1R9A/neurabin-1. Interacts with RPTOR. Interacts with IRS1. Interacts with EIF3B and EIF3C. Interacts with TRAF4. Interacts with POLDIP3. Interacts (via N-terminus) with IER5. Phosphorylation at Thr-412 is regulated by mTORC1. The phosphorylation at this site is maintained by an agonist-dependent autophosphorylation mechanism. Activated by phosphorylation at Thr-252 by PDPK1. Dephosphorylation by PPP1CC at Thr-412 in mitochondrion.

It is found in the cytoplasm. It localises to the synapse. Its subcellular location is the synaptosome. The protein localises to the mitochondrion outer membrane. The protein resides in the mitochondrion. The enzyme catalyses L-seryl-[protein] + ATP = O-phospho-L-seryl-[protein] + ADP + H(+). It carries out the reaction L-threonyl-[protein] + ATP = O-phospho-L-threonyl-[protein] + ADP + H(+). Its activity is regulated as follows. Activation requires multiple phosphorylation events on serine/threonine residues. Activation appears to be first mediated by phosphorylation of multiple sites in the autoinhibitory domain, which facilitates phosphorylation at Thr-412, disrupting the autoinhibitory mechanism and allowing phosphorylation of Thr-252 by PDPK1. The active conformation of the kinase is believed to be stabilized by a mechanism involving three conserved phosphorylation sites located in the kinase domain activation loop (Thr-252) and in the AGC-kinase C-terminal domain (Ser-394 in the middle of the tail/linker region and Thr-412 within a hydrophobic motif at its end). Activated by mTORC1; isoform Alpha I and isoform Alpha II are sensitive to rapamycin, which inhibits activating phosphorylation at Thr-412. Activated by PDPK1. Serine/threonine-protein kinase that acts downstream of mTOR signaling in response to growth factors and nutrients to promote cell proliferation, cell growth and cell cycle progression. Regulates protein synthesis through phosphorylation of EIF4B, RPS6 and EEF2K, and contributes to cell survival by repressing the pro-apoptotic function of BAD. Under conditions of nutrient depletion, the inactive form associates with the EIF3 translation initiation complex. Upon mitogenic stimulation, phosphorylation by the mechanistic target of rapamycin complex 1 (mTORC1) leads to dissociation from the EIF3 complex and activation. The active form then phosphorylates and activates several substrates in the pre-initiation complex, including the EIF2B complex and the cap-binding complex component EIF4B. Also controls translation initiation by phosphorylating a negative regulator of EIF4A, PDCD4, targeting it for ubiquitination and subsequent proteolysis. Promotes initiation of the pioneer round of protein synthesis by phosphorylating POLDIP3/SKAR. In response to IGF1, activates translation elongation by phosphorylating EEF2 kinase (EEF2K), which leads to its inhibition and thus activation of EEF2. Also plays a role in feedback regulation of mTORC2 by mTORC1 by phosphorylating MAPKAP1/SIN1, MTOR and RICTOR, resulting in the inhibition of mTORC2 and AKT1 signaling. Also involved in feedback regulation of mTORC1 and mTORC2 by phosphorylating DEPTOR. Mediates cell survival by phosphorylating the pro-apoptotic protein BAD and suppressing its pro-apoptotic function. Phosphorylates mitochondrial URI1 leading to dissociation of a URI1-PPP1CC complex. The free mitochondrial PPP1CC can then dephosphorylate RPS6KB1 at Thr-412, which is proposed to be a negative feedback mechanism for the RPS6KB1 anti-apoptotic function. Mediates TNF-alpha-induced insulin resistance by phosphorylating IRS1 at multiple serine residues, resulting in accelerated degradation of IRS1. In cells lacking functional TSC1-2 complex, constitutively phosphorylates and inhibits GSK3B. May be involved in cytoskeletal rearrangement through binding to neurabin. Phosphorylates and activates the pyrimidine biosynthesis enzyme CAD, downstream of MTOR. Following activation by mTORC1, phosphorylates EPRS and thereby plays a key role in fatty acid uptake by adipocytes and also most probably in interferon-gamma-induced translation inhibition. The polypeptide is Ribosomal protein S6 kinase beta-1 (Rps6kb1) (Mus musculus (Mouse)).